We begin with the raw amino-acid sequence, 132 residues long: Small ribosomal subunit protein eS6 (132 aa).

It belongs to the eukaryotic ribosomal protein eS6 family.

In Methanosphaerula palustris (strain ATCC BAA-1556 / DSM 19958 / E1-9c), this protein is Small ribosomal subunit protein eS6.